The primary structure comprises 278 residues: Non-haem bromoperoxidase BPO-A2 (278 aa).

The 239-residue stretch at 26–264 (PVVLIHGFPL…GAPHGLLWTH (239 aa)) folds into the AB hydrolase-1 domain. Active-site residues include Ser-99, Asp-229, and His-258.

Belongs to the AB hydrolase superfamily. Bacterial non-heme haloperoxidase / perhydrolase family. As to quaternary structure, homotrimer.

Functionally, may be a chlorinating enzyme involved in 7-chlorotetracycline biosynthesis. The polypeptide is Non-haem bromoperoxidase BPO-A2 (bpoA2) (Kitasatospora aureofaciens (Streptomyces aureofaciens)).